The primary structure comprises 530 residues: GMP synthase [glutamine-hydrolyzing] (530 aa).

In terms of domain architecture, Glutamine amidotransferase type-1 spans 4–205; sequence RILILDYGSQ…VREICGCEGD (202 aa). The active-site Nucleophile is the Cys84. Active-site residues include His179 and Glu181. The GMPS ATP-PPase domain occupies 206–398; sequence WNMPDYISEA…LGLPPQMVYR (193 aa). 233–239 serves as a coordination point for ATP; it reads SGGVDSS.

Homodimer.

It catalyses the reaction XMP + L-glutamine + ATP + H2O = GMP + L-glutamate + AMP + diphosphate + 2 H(+). Its pathway is purine metabolism; GMP biosynthesis; GMP from XMP (L-Gln route): step 1/1. Functionally, catalyzes the synthesis of GMP from XMP. This chain is GMP synthase [glutamine-hydrolyzing], found in Bordetella avium (strain 197N).